The following is a 132-amino-acid chain: Prefoldin subunit alpha (132 aa).

The protein belongs to the prefoldin subunit alpha family. Heterohexamer of two alpha and four beta subunits.

It is found in the cytoplasm. Molecular chaperone capable of stabilizing a range of proteins. Seems to fulfill an ATP-independent, HSP70-like function in archaeal de novo protein folding. The chain is Prefoldin subunit alpha from Pyrobaculum islandicum (strain DSM 4184 / JCM 9189 / GEO3).